The sequence spans 62 residues: DNA-directed RNA polymerase subunit Rpo10 (62 aa).

Residues cysteine 6, cysteine 9, cysteine 43, and cysteine 44 each contribute to the Zn(2+) site.

This sequence belongs to the archaeal Rpo10/eukaryotic RPB10 RNA polymerase subunit family. In terms of assembly, part of the RNA polymerase complex. Zn(2+) serves as cofactor.

It localises to the cytoplasm. It carries out the reaction RNA(n) + a ribonucleoside 5'-triphosphate = RNA(n+1) + diphosphate. Its function is as follows. DNA-dependent RNA polymerase (RNAP) catalyzes the transcription of DNA into RNA using the four ribonucleoside triphosphates as substrates. The chain is DNA-directed RNA polymerase subunit Rpo10 from Methanospirillum hungatei JF-1 (strain ATCC 27890 / DSM 864 / NBRC 100397 / JF-1).